The primary structure comprises 623 residues: Peptidoglycan D,D-transpeptidase MrdA (623 aa).

A helical transmembrane segment spans residues 17 to 37; it reads VIVAFGVVVVCFGILIFNLYN. Catalysis depends on S326, which acts as the Acyl-ester intermediate.

Belongs to the transpeptidase family. MrdA subfamily.

The protein resides in the cell inner membrane. It carries out the reaction Preferential cleavage: (Ac)2-L-Lys-D-Ala-|-D-Ala. Also transpeptidation of peptidyl-alanyl moieties that are N-acyl substituents of D-alanine.. Its pathway is cell wall biogenesis; peptidoglycan biosynthesis. Its function is as follows. Catalyzes cross-linking of the peptidoglycan cell wall. The sequence is that of Peptidoglycan D,D-transpeptidase MrdA from Salmonella typhimurium (strain SL1344).